We begin with the raw amino-acid sequence, 348 residues long: Protein DMR6-LIKE OXYGENASE 2 (348 aa).

One can recognise a Fe2OG dioxygenase domain in the interval 194–294; sequence KHGQHMAINY…RISIPTFYCP (101 aa). Fe cation contacts are provided by histidine 219, aspartate 221, and histidine 275. Position 285 (arginine 285) interacts with 2-oxoglutarate.

It belongs to the iron/ascorbate-dependent oxidoreductase family. It depends on Fe(2+) as a cofactor.

It carries out the reaction salicylate + NADH + O2 + H(+) = 2,3-dihydroxybenzoate + NAD(+) + H2O. Converts salicylic acid (SA) to 2,3-dihydroxybenzoic acid (2,3-DHBA). Negative regulator of defense against Hyaloperonospora arabidopsidis. Its function is as follows. (Microbial infection) Confers susceptibility to the downy mildew pathogen Hyaloperonospora arabidopsidis. The chain is Protein DMR6-LIKE OXYGENASE 2 from Arabidopsis thaliana (Mouse-ear cress).